The primary structure comprises 2276 residues: Protein Ycf2 (2276 aa).

Gly1621–Ser1628 lines the ATP pocket.

Belongs to the Ycf2 family.

The protein localises to the plastid. It localises to the chloroplast stroma. Probable ATPase of unknown function. Its presence in a non-photosynthetic plant (Epifagus virginiana) and experiments in tobacco indicate that it has an essential function which is probably not related to photosynthesis. The sequence is that of Protein Ycf2 from Guizotia abyssinica (Niger).